The primary structure comprises 66 residues: Large ribosomal subunit protein bL33c (66 aa).

It belongs to the bacterial ribosomal protein bL33 family.

It is found in the plastid. It localises to the chloroplast. In Cicer arietinum (Chickpea), this protein is Large ribosomal subunit protein bL33c.